The following is a 177-amino-acid chain: Disulfide bond formation protein B (177 aa).

Topologically, residues 1–14 are cytoplasmic; sequence MLALLKQFSEKRFV. The chain crosses the membrane as a helical span at residues 15–31; that stretch reads WFLLAFSSLALESTALY. Residues 32–49 lie on the Periplasmic side of the membrane; the sequence is FQYGMGLQPCVLCVYERL. C41 and C44 are disulfide-bonded. A helical transmembrane segment spans residues 50–65; sequence AMIGLFVAGTIALLQP. The Cytoplasmic segment spans residues 66 to 72; the sequence is RVFILRL. A helical transmembrane segment spans residues 73–90; it reads IALALGLFSSIKGLLISF. Residues 91–145 lie on the Periplasmic side of the membrane; the sequence is RHLDLQMNPAPWKQCEFIPNFPETLPFHQWFPFIFNPTGSCNESQWSLFGLTMVQ. C105 and C131 are disulfide-bonded. The helical transmembrane segment at 146–164 threads the bilayer; that stretch reads WLVVIFSLYVVILTLLLIA. The Cytoplasmic segment spans residues 165-177; the sequence is QVIKTRKQRRLFN.

This sequence belongs to the DsbB family.

It localises to the cell inner membrane. In terms of biological role, required for disulfide bond formation in some periplasmic proteins. Acts by oxidizing the DsbA protein. The polypeptide is Disulfide bond formation protein B (Haemophilus influenzae (strain ATCC 51907 / DSM 11121 / KW20 / Rd)).